The primary structure comprises 25 residues: Putative cytochrome c4 (25 aa).

The disordered stretch occupies residues 1–25; it reads QEDIEAGKQKSATCTACHGQEGNST. The heme site is built by Cys-14 and Cys-17.

Post-translationally, binds 2 heme groups per subunit.

It localises to the periplasm. Functionally, diheme, high potential cytochrome c believed to be an intermediate electron donor to terminal oxidation systems. The sequence is that of Putative cytochrome c4 from Aliivibrio fischeri (Vibrio fischeri).